The primary structure comprises 238 residues: Uridylate kinase (238 aa).

12–15 (KLSG) provides a ligand contact to ATP. G54 is a UMP binding site. The ATP site is built by G55 and R59. UMP contacts are provided by residues D74 and 135–142 (TGNPYFTT). Residues T162, Y168, and D171 each contribute to the ATP site.

This sequence belongs to the UMP kinase family. As to quaternary structure, homohexamer.

The protein localises to the cytoplasm. It carries out the reaction UMP + ATP = UDP + ADP. It participates in pyrimidine metabolism; CTP biosynthesis via de novo pathway; UDP from UMP (UMPK route): step 1/1. Inhibited by UTP. Functionally, catalyzes the reversible phosphorylation of UMP to UDP. This is Uridylate kinase from Nitratidesulfovibrio vulgaris (strain ATCC 29579 / DSM 644 / CCUG 34227 / NCIMB 8303 / VKM B-1760 / Hildenborough) (Desulfovibrio vulgaris).